We begin with the raw amino-acid sequence, 328 residues long: Malate dehydrogenase (328 aa).

Residue 11-17 participates in NAD(+) binding; the sequence is GAAGQIG. 2 residues coordinate substrate: Arg94 and Arg100. NAD(+)-binding positions include Asn107, Gln114, and 131 to 133; that span reads VGN. Substrate-binding residues include Asn133 and Arg164. Catalysis depends on His189, which acts as the Proton acceptor.

Belongs to the LDH/MDH superfamily. MDH type 2 family.

It catalyses the reaction (S)-malate + NAD(+) = oxaloacetate + NADH + H(+). Catalyzes the reversible oxidation of malate to oxaloacetate. This is Malate dehydrogenase from Acinetobacter baumannii (strain SDF).